Reading from the N-terminus, the 211-residue chain is Ribosomal RNA small subunit methyltransferase G (211 aa).

Glycine 73, phenylalanine 78, and arginine 141 together coordinate S-adenosyl-L-methionine.

This sequence belongs to the methyltransferase superfamily. RNA methyltransferase RsmG family.

The protein resides in the cytoplasm. It carries out the reaction guanosine(527) in 16S rRNA + S-adenosyl-L-methionine = N(7)-methylguanosine(527) in 16S rRNA + S-adenosyl-L-homocysteine. Its function is as follows. Specifically methylates the N7 position of guanine in position 527 of 16S rRNA. The sequence is that of Ribosomal RNA small subunit methyltransferase G from Jannaschia sp. (strain CCS1).